The following is a 1060-amino-acid chain: DNA-directed RNA polymerase subunit beta (1060 aa).

This sequence belongs to the RNA polymerase beta chain family. In terms of assembly, in plastids the minimal PEP RNA polymerase catalytic core is composed of four subunits: alpha, beta, beta', and beta''. When a (nuclear-encoded) sigma factor is associated with the core the holoenzyme is formed, which can initiate transcription.

It is found in the plastid. It localises to the chloroplast. The enzyme catalyses RNA(n) + a ribonucleoside 5'-triphosphate = RNA(n+1) + diphosphate. Its function is as follows. DNA-dependent RNA polymerase catalyzes the transcription of DNA into RNA using the four ribonucleoside triphosphates as substrates. The protein is DNA-directed RNA polymerase subunit beta of Calycanthus floridus var. glaucus (Eastern sweetshrub).